The sequence spans 194 residues: Early growth response protein 1 (194 aa).

C2H2-type zinc fingers lie at residues 1–18 (CDRRFSRSDELTRHIRIH), 24–46 (FQCRICMRNFSRSDHLTTHIRTH), and 52–74 (FACDICGRKFARSDERKRHTKIH). Residues 66–88 (ERKRHTKIHLRQKDKKVEKAASV) are disordered. Over residues 69–79 (RHTKIHLRQKD) the composition is skewed to basic residues.

The protein belongs to the EGR C2H2-type zinc-finger protein family.

The protein resides in the nucleus. Its subcellular location is the cytoplasm. In terms of biological role, transcriptional regulator. Recognizes and binds to the DNA sequence 5'-GCG(T/G)GGGCG-3'(EGR-site) in the promoter region of target genes. Binds double-stranded target DNA, irrespective of the cytosine methylation status. Regulates the transcription of numerous target genes, and thereby plays an important role in regulating the response to growth factors, DNA damage, and ischemia. Plays a role in the regulation of cell survival, proliferation and cell death. Mediates responses to ischemia and hypoxia; regulates the expression of proteins that are involved in inflammatory processes. Plays a role in regulating the expression of circadian clock genes. This Coturnix japonica (Japanese quail) protein is Early growth response protein 1 (EGR1).